Here is a 164-residue protein sequence, read N- to C-terminus: Small ribosomal subunit protein uS5 (164 aa).

The region spanning 11-74 (LKEKLISVNR…EKARKNMIII (64 aa)) is the S5 DRBM domain.

It belongs to the universal ribosomal protein uS5 family. In terms of assembly, part of the 30S ribosomal subunit. Contacts proteins S4 and S8.

With S4 and S12 plays an important role in translational accuracy. Its function is as follows. Located at the back of the 30S subunit body where it stabilizes the conformation of the head with respect to the body. The chain is Small ribosomal subunit protein uS5 from Buchnera aphidicola subsp. Cinara cedri (strain Cc).